Here is a 993-residue protein sequence, read N- to C-terminus: MAVLKLTDQPPLVQAIFSGDPEEIRMLIHKTEDVNTLDSEKRTPLHVAAFLGDAEIIELLILSGARVNAKDNMWLTPLHRAVASRSEEAVQVLIKHSADVNARDKNWQTPLHVAAANKAVKCAEVIIPLLSSVNVSDRGGRTALHHAALNGHVEMVNLLLAKGANINAFDKKDRRALHWAAYMGHLDVVALLINHGAEVTCKDKKGYTPLHAAASNGQINVVKHLLNLGVEIDEINVYGNTALHIACYNGQDAVVNELIDYGANVNQPNNNGFTPLHFAAASTHGALCLELLVNNGADVNIQSKDGKSPLHMTAVHGRFTRSQTLIQNGGEIDCVDKDGNTPLHVAARYGHELLINTLITSGADTAKCGIHSMFPLHLAALNAHSDCCRKLLSSGFEIDTPDKFGRTCLHAAAAGGNVECIKLLQSSGADFHKKDKCGRTPLHYAAANCHFHCIETLVTTGANVNETDDWGRTALHYAAASDMDRNKTILGNAHDNSEELERARELKEKEATLCLEFLLQNDANPSIRDKEGYNSIHYAAAYGHRQCLELLLERTNSGFEESDSGATKSPLHLAAYNGHHQALEVLLQSLVDLDIRDEKGRTALDLAAFKGHTECVEALINQGASIFVKDNVTKRTPLHASVINGHTLCLRLLLEIADNPEAVDVKDAKGQTPLMLAVAYGHIDAVSLLLEKEANVDTVDILGCTALHRGIMTGHEECVQMLLEQEVSILCKDSRGRTPLHYAAARGHATWLSELLQMALSEEDCCFKDNQGYTPLHWACYNGNENCIEVLLEQKCFRKFIGNPFTPLHCAIINDHGNCASLLLGAIDSSIVSCRDDKGRTPLHAAAFADHVECLQLLLRHSAPVNAVDNSGKTALMMAAENGQAGAVDILVNSAQADLTVKDKDLNTPLHLACSKGHEKCALLILDKIQDESLINEKNNALQTPLHVAARNGLKVVVEELLAKGACVLAVDENASRSNGPRSTPGTAVQKEE.

28 ANK repeats span residues 7 to 36 (TDQP…DVNT), 40 to 69 (EKRT…RVNA), 73 to 102 (MWLT…DVNA), 106 to 135 (NWQT…SVNV), 139 to 168 (GGRT…NINA), 172 to 201 (KDRR…EVTC), 205 to 234 (KGYT…EIDE), 238 to 267 (YGNT…NVNQ), 271 to 301 (NGFT…DVNI), 305 to 334 (DGKS…EIDC), 338 to 367 (DGNT…DTAK), 371 to 400 (HSMF…EIDT), 404 to 433 (FGRT…DFHK), 437 to 466 (CGRT…NVNE), 470 to 498 (WGRT…DNSE), 531 to 561 (EGYN…GFEE), 566 to 595 (ATKS…DLDI), 599 to 628 (KGRT…SIFV), 633 to 662 (TKRT…NPEA), 669 to 698 (KGQT…NVDT), 702 to 731 (LGCT…SILC), 735 to 764 (RGRT…SEED), 771 to 800 (QGYT…FRKF), 803 to 832 (NPFT…SSIV), 838 to 867 (KGRT…PVNA), 871 to 901 (SGKT…DLTV), 905 to 934 (DLNT…DESL), and 941 to 970 (ALQT…CVLA).

As to quaternary structure, protein phosphatase 6 (PP6) holoenzyme is proposed to be a heterotrimeric complex formed by the catalytic subunit, a SAPS domain-containing subunit (PP6R) and an ankyrin repeat-domain containing regulatory subunit (ARS). Interacts with PPP6R1.

In terms of biological role, putative regulatory subunit of protein phosphatase 6 (PP6) that may be involved in the recognition of phosphoprotein substrates. In Homo sapiens (Human), this protein is Serine/threonine-protein phosphatase 6 regulatory ankyrin repeat subunit B (ANKRD44).